The chain runs to 280 residues: uncharacterized protein (280 aa).

Disordered regions lie at residues 1–83 and 248–280; these read MELK…EEEQ and IRHR…EARL. Over residues 12–25 the composition is skewed to polar residues; the sequence is SAKTDNHTVYQNSP. 2 stretches are compositionally biased toward basic and acidic residues: residues 41-71 and 249-280; these read KQTR…RVDD and RHRE…EARL.

Belongs to the chlamydial CPn_0705/CT_671/TC_0042 family.

This is an uncharacterized protein from Chlamydia pneumoniae (Chlamydophila pneumoniae).